We begin with the raw amino-acid sequence, 253 residues long: Ribulose bisphosphate carboxylase large chain (253 aa).

Substrate-binding residues include Asn-35 and Thr-85. Residue Lys-87 is the Proton acceptor of the active site. Lys-89 is a substrate binding site. Mg(2+)-binding residues include Lys-113, Asp-115, and Glu-116. Lys-113 carries the post-translational modification N6-carboxylysine. Residue His-206 is the Proton acceptor of the active site. The substrate site is built by Arg-207 and His-239.

It belongs to the RuBisCO large chain family. Type I subfamily. Heterohexadecamer of 8 large chains and 8 small chains; disulfide-linked. The disulfide link is formed within the large subunit homodimers. It depends on Mg(2+) as a cofactor. The disulfide bond which can form in the large chain dimeric partners within the hexadecamer appears to be associated with oxidative stress and protein turnover.

Its subcellular location is the plastid. The protein resides in the chloroplast. It catalyses the reaction 2 (2R)-3-phosphoglycerate + 2 H(+) = D-ribulose 1,5-bisphosphate + CO2 + H2O. The enzyme catalyses D-ribulose 1,5-bisphosphate + O2 = 2-phosphoglycolate + (2R)-3-phosphoglycerate + 2 H(+). Functionally, ruBisCO catalyzes two reactions: the carboxylation of D-ribulose 1,5-bisphosphate, the primary event in carbon dioxide fixation, as well as the oxidative fragmentation of the pentose substrate in the photorespiration process. Both reactions occur simultaneously and in competition at the same active site. The chain is Ribulose bisphosphate carboxylase large chain (rbcL) from Magnolia latahensis (Apocynophyllum latahense).